The following is a 310-amino-acid chain: Cytochrome f (310 aa).

Positions 1–27 (MRRLLSPLFAALIVGVTVLTAPSTSWA) are cleaved as a signal peptide. 4 residues coordinate heme: Y28, C48, C51, and H52. A helical transmembrane segment spans residues 277–297 (IYGLLAFFAAVALAQIMLVLK).

The protein belongs to the cytochrome f family. In terms of assembly, the 4 large subunits of the cytochrome b6-f complex are cytochrome b6, subunit IV (17 kDa polypeptide, PetD), cytochrome f and the Rieske protein, while the 4 small subunits are PetG, PetL, PetM and PetN. The complex functions as a dimer. Heme serves as cofactor.

Its subcellular location is the cellular thylakoid membrane. Component of the cytochrome b6-f complex, which mediates electron transfer between photosystem II (PSII) and photosystem I (PSI), cyclic electron flow around PSI, and state transitions. The sequence is that of Cytochrome f from Synechococcus sp. (strain WH7803).